The following is an 85-amino-acid chain: Large ribosomal subunit protein bL27 (85 aa).

The disordered stretch occupies residues 1–20 (MATKKAGGSTRNGRDSEAKR).

The protein belongs to the bacterial ribosomal protein bL27 family.

This is Large ribosomal subunit protein bL27 from Haemophilus influenzae (strain ATCC 51907 / DSM 11121 / KW20 / Rd).